Reading from the N-terminus, the 92-residue chain is MADQLTVEIIAAIKNLAQSENGGRIPAAIGDITADRQLTSLGIDSLALADVLWDLEQAYGIRIEMNTADAWSNLKNIGDVVEAVRGLIAKEA.

Residues 4–88 enclose the Carrier domain; that stretch reads QLTVEIIAAI…DVVEAVRGLI (85 aa). Ser-45 bears the O-(pantetheine 4'-phosphoryl)serine mark.

In terms of processing, 4'-phosphopantetheine is transferred from CoA to a specific serine of apo-NodF.

Functionally, proposed to synthesize nod factor fatty acyl chain. Involved in trans-2,trans-4,trans-6,cis-11-octadecatetraenoic acid biosynthesis. The sequence is that of Nodulation protein F (nodF) from Rhizobium leguminosarum bv. trifolii.